A 74-amino-acid chain; its full sequence is Large ribosomal subunit protein uL14c (74 aa).

This sequence belongs to the universal ribosomal protein uL14 family. As to quaternary structure, part of the 50S ribosomal subunit.

Its subcellular location is the plastid. The protein resides in the chloroplast. Its function is as follows. Binds to 23S rRNA. The polypeptide is Large ribosomal subunit protein uL14c (rpl14) (Oenothera ammophila (Evening primerose)).